Here is a 382-residue protein sequence, read N- to C-terminus: Mannitol-1-phosphate 5-dehydrogenase (382 aa).

3–14 contacts NAD(+); sequence ALHFGAGNIGRG. K269 carries the N6-acetyllysine modification.

It belongs to the mannitol dehydrogenase family.

It carries out the reaction D-mannitol 1-phosphate + NAD(+) = beta-D-fructose 6-phosphate + NADH + H(+). In Shigella boydii serotype 18 (strain CDC 3083-94 / BS512), this protein is Mannitol-1-phosphate 5-dehydrogenase.